We begin with the raw amino-acid sequence, 617 residues long: Transmembrane protein 232 (617 aa).

A helical transmembrane segment spans residues 129 to 149; sequence LVKIGYLIFLRLFVFFLHGHL. Residues 567-604 adopt a coiled-coil conformation; it reads LKQIEAVCEAQNRKDEEEKEKIRFQEIMKQRERKLNKQ. A disordered region spans residues 598–617; it reads ERKLNKQTKPYEITPSEKKE.

Its subcellular location is the membrane. In terms of biological role, plays a critical role for male fertility and sperm motility by regulating sperm cytoplasm removal and maintaining axoneme integrity. In Rattus norvegicus (Rat), this protein is Transmembrane protein 232 (Tmem232).